We begin with the raw amino-acid sequence, 389 residues long: snRNA-activating protein complex subunit 1 (389 aa).

The segment covering Met1–Gly15 has biased composition (low complexity). Disordered stretches follow at residues Met1–Ile22, Trp245–Glu276, and Ser290–Cys389. Residues Val20 to Val187 form an SNAPC3-binding region. The SNAPC4-binding stretch occupies residues Pro183–Lys287. The segment covering Trp245–Glu262 has biased composition (basic and acidic residues). Phosphoserine is present on residues Ser308 and Ser309.

In terms of assembly, part of the SNAPc complex composed of 5 subunits: SNAPC1, SNAPC2, SNAPC3, SNAPC4 and SNAPC5. SNAPC1 interacts with SNAPC3, SNAPC4 and TBP.

Its subcellular location is the nucleus. Its function is as follows. Part of the SNAPc complex required for the transcription of both RNA polymerase II and III small-nuclear RNA genes. Binds to the proximal sequence element (PSE), a non-TATA-box basal promoter element common to these 2 types of genes. Recruits TBP and BRF2 to the U6 snRNA TATA box. The polypeptide is snRNA-activating protein complex subunit 1 (Snapc1) (Mus musculus (Mouse)).